The primary structure comprises 141 residues: ATP synthase epsilon chain (141 aa).

This sequence belongs to the ATPase epsilon chain family. In terms of assembly, F-type ATPases have 2 components, CF(1) - the catalytic core - and CF(0) - the membrane proton channel. CF(1) has five subunits: alpha(3), beta(3), gamma(1), delta(1), epsilon(1). CF(0) has three main subunits: a, b and c.

Its subcellular location is the cell membrane. Functionally, produces ATP from ADP in the presence of a proton gradient across the membrane. This Lactococcus lactis subsp. cremoris (strain SK11) protein is ATP synthase epsilon chain.